The chain runs to 194 residues: Molybdenum cofactor guanylyltransferase (194 aa).

GTP contacts are provided by residues 12–14, Lys-25, Asn-53, Asp-70, and Asp-100; that span reads LAG. Asp-100 serves as a coordination point for Mg(2+).

This sequence belongs to the MobA family. Monomer. The cofactor is Mg(2+).

It localises to the cytoplasm. It catalyses the reaction Mo-molybdopterin + GTP + H(+) = Mo-molybdopterin guanine dinucleotide + diphosphate. Its function is as follows. Transfers a GMP moiety from GTP to Mo-molybdopterin (Mo-MPT) cofactor (Moco or molybdenum cofactor) to form Mo-molybdopterin guanine dinucleotide (Mo-MGD) cofactor. The sequence is that of Molybdenum cofactor guanylyltransferase from Aliivibrio fischeri (strain MJ11) (Vibrio fischeri).